Reading from the N-terminus, the 763-residue chain is MKNSLFVTKRNGKKEKINLDKIHKVLNWAAKGLENISVSQVELRSRIQFYNNISTVNIHETIIKAAADLISENTPDYQYMAARLAIFHLRKKAYGQFEPPNLYYHVKKMVQLGKYDEKLLQNYSFEEYVEMNSFVDHRRDMNFSYAAVKQLEAKYLLQNRVTGQIYESAQFLYILISACLFSKYEKKVRMNYIQRFYNAISTFKISLPTPIMSGVRTPTRQFSSCVLIECADNLNSINATTSAIVKYVSQRAGIGINAGQIRALGSPIRNGEAFHTGCIPFYKHFQSAVKSCSQGGVRGGAATVFYPIWHLEIESLLVLKNNRGIEENRVRHLDYAVQINKLMYQRMLLGQKITLFSPSDVPKLYEFFFSDQKKFKEIYIKYEKNRNIRKKSINAIDLFCLIMRERASTGRIYIQHVDHCNSHSAFNSKLATIRQSNLCLEITLPTKPLNNIDDKNGEIALCTLSALNLGLINDLHDLKELSTLSVRALDEILEYQNYPVVCAKKSAISRRSLGIGVINFAYYLAKNKVRYSDGSAKNLTHKTFEAIQYYLLKASCELAKEKGSCSLFNQTNYYLGKFPIDTYKKDIDSICNEPLHLNWNLLRKKIKKYGLRNSTLSALMPSETSSQISNATNGIEPPRGFISIKSSKDGMLRQVVPEYKKLKSEYELLWEIPNNIGYLELVAIMQKFVDQSISANTNYDPKRFLNEKIPMKQLIYDLLVAYKLGIKTLYYQNTRDGAEDNQNLNKSIENIKEDNCTSGSCTI.

The 91-residue stretch at leucine 5–glycine 95 folds into the ATP-cone domain. ATP is bound by residues lysine 9, glutamate 15 to lysine 21, threonine 55, and lysine 91. Threonine 209 contributes to the GDP binding site. A disulfide bridge links cysteine 225 with cysteine 462. Residues aspartate 232–leucine 234, arginine 262, and arginine 269 contribute to the dTTP site. Residue asparagine 437 participates in GDP binding. Catalysis depends on asparagine 437, which acts as the Proton acceptor. Cysteine 439 serves as the catalytic Cysteine radical intermediate. GDP contacts are provided by residues glutamate 441 and glutamate 623–serine 625. Glutamate 441 serves as the catalytic Proton acceptor.

The protein belongs to the ribonucleoside diphosphate reductase large chain family. In terms of assembly, tetramer of two alpha and two beta subunits.

The catalysed reaction is a 2'-deoxyribonucleoside 5'-diphosphate + [thioredoxin]-disulfide + H2O = a ribonucleoside 5'-diphosphate + [thioredoxin]-dithiol. Under complex allosteric control mediated by deoxynucleoside triphosphates and ATP binding to separate specificity and activation sites on the alpha subunit. The type of nucleotide bound at the specificity site determines substrate preference. It seems probable that ATP makes the enzyme reduce CDP and UDP, dGTP favors ADP reduction and dTTP favors GDP reduction. Stimulated by ATP and inhibited by dATP binding to the activity site. Provides the precursors necessary for DNA synthesis. Catalyzes the biosynthesis of deoxyribonucleotides from the corresponding ribonucleotides. In Buchnera aphidicola subsp. Schizaphis graminum (strain Sg), this protein is Ribonucleoside-diphosphate reductase subunit alpha (nrdA).